A 152-amino-acid polypeptide reads, in one-letter code: Lipoprotein signal peptidase (152 aa).

Transmembrane regions (helical) follow at residues 55–75 (NKMW…VFYM) and 85–105 (LGIS…DRVF). Residues Asp111 and Asp129 contribute to the active site. Residues 124 to 144 (VFNIADSALCIGVVLIIIQTL) traverse the membrane as a helical segment.

It belongs to the peptidase A8 family.

Its subcellular location is the cell membrane. It catalyses the reaction Release of signal peptides from bacterial membrane prolipoproteins. Hydrolyzes -Xaa-Yaa-Zaa-|-(S,diacylglyceryl)Cys-, in which Xaa is hydrophobic (preferably Leu), and Yaa (Ala or Ser) and Zaa (Gly or Ala) have small, neutral side chains.. It participates in protein modification; lipoprotein biosynthesis (signal peptide cleavage). Its function is as follows. This protein specifically catalyzes the removal of signal peptides from prolipoproteins. The sequence is that of Lipoprotein signal peptidase from Bacillus cereus (strain G9842).